Consider the following 365-residue polypeptide: Aminotransferase poxL (365 aa).

Pyridoxal 5'-phosphate is bound at residue Arg92. At Lys193 the chain carries N6-(pyridoxal phosphate)lysine. Pyridoxal 5'-phosphate is bound at residue Glu229.

The protein belongs to the class-IV pyridoxal-phosphate-dependent aminotransferase family. The cofactor is pyridoxal 5'-phosphate.

It functions in the pathway secondary metabolite biosynthesis. Functionally, aminotransferase; part of the gene cluster that mediates the biosynthesis of oxaleimides, cytotoxic compounds containing an unusual disubstituted succinimide moiety. The first step of the pathway is provided by the HR-PKS poxF that serves in a new mode of collaborative biosynthesis with the PKS-NRPS poxE, by providing the olefin containing amino acid substrate via the synthesis of an ACP-bound dec-4-enoate. The cytochrome P450 monooxygenase poxM-catalyzed oxidation at the alpha-position creates the enzyme-bound 2-hydroxydec-4-enoyl-ACP thioester, which may be prone to spontaneous hydrolysis to yield 2-hydroxydec-4-enoic acid due to increased electrophilicity of the carbonyl. 2-hydroxydec-4-enoic acid can then be further oxidized by poxM to yield the alpha-ketoacid 2-oxodec-4-enoicacid, which is reductively aminated by the aminotransferase poxL to yield (S,E)-2-aminodec-4-enoic acid. The Hybrid PKS-NRPS synthetase poxE then performs condensation between the octaketide product of its PKS modules and the amino group of (S,E)-2-aminodec-4-enoic acid which is activated and incorporated by the adenylation domain. The resulting aminoacyl product can be cyclized by the Diels-Alderase PoxQ and reductively released by the reductive (R) domain of poxE to yield an aldehyde intermediate. The released aldehyde is then substrate for a Knoevenagel condensation by the hydrolyase poxO followed by an oxidation at the 5-position of the pyrrolidone ring. The presence of the olefin from the amino acid building block allows for migration of the substituted allyl group to occur. This allylic transposition reaction takes place in a conjugate addition, semipinacol-like fashion to yield a succinimide intermediate. Iterative two-electron oxidations of the C7 methyl of the succinimide intermediate to the carboxylic acid can be catalyzed by one of two remaining cytochrome P450 monooxygenasess poxC or poxD to yield oxaleimide A. Subsequent oxidation yields the maleimide scaffold oxaleimide I. Both oxaleimide A and oxaleimide I can undergo oxidative modifications in the decalin ring to yield the series of products oxaleimides B to H. The sequence is that of Aminotransferase poxL from Penicillium oxalicum (strain 114-2 / CGMCC 5302) (Penicillium decumbens).